Reading from the N-terminus, the 256-residue chain is Acetyl-coenzyme A carboxylase carboxyl transferase subunit alpha (256 aa).

The CoA carboxyltransferase C-terminal domain maps to 1–236 (MTKITRIIKE…KEEIAAELDS (236 aa)).

This sequence belongs to the AccA family. As to quaternary structure, acetyl-CoA carboxylase is a heterohexamer composed of biotin carboxyl carrier protein (AccB), biotin carboxylase (AccC) and two subunits each of ACCase subunit alpha (AccA) and ACCase subunit beta (AccD).

It localises to the cytoplasm. It carries out the reaction N(6)-carboxybiotinyl-L-lysyl-[protein] + acetyl-CoA = N(6)-biotinyl-L-lysyl-[protein] + malonyl-CoA. Its pathway is lipid metabolism; malonyl-CoA biosynthesis; malonyl-CoA from acetyl-CoA: step 1/1. In terms of biological role, component of the acetyl coenzyme A carboxylase (ACC) complex. First, biotin carboxylase catalyzes the carboxylation of biotin on its carrier protein (BCCP) and then the CO(2) group is transferred by the carboxyltransferase to acetyl-CoA to form malonyl-CoA. The sequence is that of Acetyl-coenzyme A carboxylase carboxyl transferase subunit alpha from Streptococcus sanguinis (strain SK36).